A 691-amino-acid polypeptide reads, in one-letter code: Elongation factor G (691 aa).

One can recognise a tr-type G domain in the interval Glu8–Leu283. GTP is bound by residues Ala17–Thr24, Asp81–His85, and Asn135–Asp138.

It belongs to the TRAFAC class translation factor GTPase superfamily. Classic translation factor GTPase family. EF-G/EF-2 subfamily.

Its subcellular location is the cytoplasm. In terms of biological role, catalyzes the GTP-dependent ribosomal translocation step during translation elongation. During this step, the ribosome changes from the pre-translocational (PRE) to the post-translocational (POST) state as the newly formed A-site-bound peptidyl-tRNA and P-site-bound deacylated tRNA move to the P and E sites, respectively. Catalyzes the coordinated movement of the two tRNA molecules, the mRNA and conformational changes in the ribosome. In Parvibaculum lavamentivorans (strain DS-1 / DSM 13023 / NCIMB 13966), this protein is Elongation factor G.